Here is a 402-residue protein sequence, read N- to C-terminus: La-related protein 7 homolog (402 aa).

The HTH La-type RNA-binding-like region stretch occupies residues 64-138 (EPLNPDFLSA…FDNSSHMVIR (75 aa)). Positions 148–230 (IPLYDRIIYV…LTRKEWTNRE (83 aa)) are RRM-like region. Residues 288-400 (DFTKNLLTRI…EEEKNYWRML (113 aa)) are xRRM-like region. The region spanning 288–402 (DFTKNLLTRI…EKNYWRMLKK (115 aa)) is the xRRM domain.

This sequence belongs to the LARP7 family. In terms of assembly, component of the telomerase holoenzyme complex composed minimally of trt1 and the telomerase RNA template component. Interacts with skp1.

The protein resides in the chromosome. The protein localises to the telomere. It is found in the nucleus. Its subcellular location is the cytoplasm. RNA-binding protein required for assembly of the holoenzyme telomerase ribonucleoprotein (RNP) complex. Specifically binds telomerase RNA ter1 and promotes assembly of ter1 with catalytic subunit trt1. Telomerase is a ribonucleoprotein enzyme essential that copies new telomeric repeats onto chromosome ends and functions to maintain cell division. The polypeptide is La-related protein 7 homolog (Schizosaccharomyces pombe (strain 972 / ATCC 24843) (Fission yeast)).